Here is a 421-residue protein sequence, read N- to C-terminus: UDP-N-acetylglucosamine 1-carboxyvinyltransferase (421 aa).

Phosphoenolpyruvate is bound at residue 22–23; that stretch reads KN. Arginine 93 lines the UDP-N-acetyl-alpha-D-glucosamine pocket. The Proton donor role is filled by cysteine 117. The residue at position 117 (cysteine 117) is a 2-(S-cysteinyl)pyruvic acid O-phosphothioketal. UDP-N-acetyl-alpha-D-glucosamine-binding positions include 122-126, aspartate 308, and isoleucine 330; that span reads RPVDL.

The protein belongs to the EPSP synthase family. MurA subfamily.

The protein localises to the cytoplasm. It carries out the reaction phosphoenolpyruvate + UDP-N-acetyl-alpha-D-glucosamine = UDP-N-acetyl-3-O-(1-carboxyvinyl)-alpha-D-glucosamine + phosphate. Its pathway is cell wall biogenesis; peptidoglycan biosynthesis. Cell wall formation. Adds enolpyruvyl to UDP-N-acetylglucosamine. The protein is UDP-N-acetylglucosamine 1-carboxyvinyltransferase of Pseudomonas fluorescens (strain SBW25).